Consider the following 171-residue polypeptide: Neuronal vesicle trafficking-associated protein 2 (171 aa).

Over residues 1 to 10 (MVKLNSNPSE) the composition is skewed to polar residues. A disordered region spans residues 1 to 21 (MVKLNSNPSEKGTKPPSVEDG). Residues 1-71 (MVKLNSNPSE…FRVPKIAEFT (71 aa)) are Cytoplasmic-facing. Residues 72 to 92 (VTILVSLALAFLACIVFLVVY) form a helical; Signal-anchor for type II membrane protein membrane-spanning segment. Residues 93 to 171 (KAFTYDHSCP…EPKPPKTQGH (79 aa)) lie on the Lumenal side of the membrane.

This sequence belongs to the NSG family.

The protein resides in the membrane. It is found in the golgi apparatus. Its subcellular location is the trans-Golgi network membrane. It localises to the cell projection. The protein localises to the dendrite. The protein resides in the endosome membrane. It is found in the early endosome membrane. Its subcellular location is the late endosome membrane. It localises to the lysosome lumen. The protein localises to the cytoplasmic vesicle membrane. The protein resides in the golgi stack membrane. It is found in the endosome. Its subcellular location is the multivesicular body membrane. The protein is Neuronal vesicle trafficking-associated protein 2 of Homo sapiens (Human).